Here is a 999-residue protein sequence, read N- to C-terminus: Translation initiation factor IF-2 (999 aa).

Residues 50-407 (AFVNNTGSPA…RGQGQTVRLS (358 aa)) form a disordered region. Composition is skewed to pro residues over residues 60 to 89 (PAAP…PPGG) and 96 to 121 (PMPP…PPQS). Residues 136–162 (VAAAEARAAALKAEQEAAVKAAQAARQ) are compositionally biased toward low complexity. The span at 163-173 (QQRDNVRREPP) shows a compositional bias: basic and acidic residues. The span at 179-194 (RPGPRPGPGAMPPRPG) shows a compositional bias: pro residues. Over residues 213–222 (GGRPPARGAG) the composition is skewed to low complexity. A compositionally biased stretch (pro residues) spans 244–266 (RPSPASMPPRPSPASMPPRPSPA). Gly residues predominate over residues 275-367 (RPGGPGSGRP…GAAGAFGRPG (93 aa)). Residues 371 to 380 (TRGRKSKKQR) show a composition bias toward basic residues. Residues 388 to 405 (SAPTMSSGAPRGQGQTVR) show a composition bias toward polar residues. The region spanning 490–662 (SRPPVVTVMG…VLLTADASLE (173 aa)) is the tr-type G domain. The G1 stretch occupies residues 499-506 (GHVDHGKT). 499-506 (GHVDHGKT) serves as a coordination point for GTP. The G2 stretch occupies residues 524–528 (GITQH). A G3 region spans residues 549 to 552 (DTPG). GTP is bound by residues 549–553 (DTPGH) and 603–606 (NKID). The interval 603–606 (NKID) is G4. The segment at 639–641 (AAK) is G5.

It belongs to the TRAFAC class translation factor GTPase superfamily. Classic translation factor GTPase family. IF-2 subfamily.

It localises to the cytoplasm. One of the essential components for the initiation of protein synthesis. Protects formylmethionyl-tRNA from spontaneous hydrolysis and promotes its binding to the 30S ribosomal subunits. Also involved in the hydrolysis of GTP during the formation of the 70S ribosomal complex. The polypeptide is Translation initiation factor IF-2 (Salinispora tropica (strain ATCC BAA-916 / DSM 44818 / JCM 13857 / NBRC 105044 / CNB-440)).